Here is a 563-residue protein sequence, read N- to C-terminus: UvrABC system protein C (563 aa).

A GIY-YIG domain is found at N12 to A87. The UVR domain maps to S194 to V229.

It belongs to the UvrC family. In terms of assembly, interacts with UvrB in an incision complex.

The protein localises to the cytoplasm. Its function is as follows. The UvrABC repair system catalyzes the recognition and processing of DNA lesions. UvrC both incises the 5' and 3' sides of the lesion. The N-terminal half is responsible for the 3' incision and the C-terminal half is responsible for the 5' incision. This is UvrABC system protein C from Fervidobacterium nodosum (strain ATCC 35602 / DSM 5306 / Rt17-B1).